We begin with the raw amino-acid sequence, 287 residues long: Myogenin (287 aa).

Phosphoserine; by CaMK2G occurs at positions 77 and 79. In terms of domain architecture, bHLH spans 81–132; that stretch reads DRRRAATLREKRRLKKVNEAFEALKRSTLLNPNQRLPKVEILRSAIQYIERL. A Phosphothreonine; by CaMK2G modification is found at Thr87.

Homodimer and heterodimer with E12; heterodimerization enhances MYOG DNA-binding and transcriptional activities. Interacts with SMARCA4/BRG1/BAF190A. Interacts (via C-terminal region) with SSRP1 and SUPT16H; the interaction is indicative of an interaction with the FACT complex. Interacts with CSRP3. Phosphorylated by CAMK2G on threonine and serine amino acids in a muscle activity-dependent manner. Phosphorylation of Thr-87 impairs both DNA-binding and trans-activation functions in contracting muscles. As to expression, expressed in muscle (at protein level).

The protein resides in the nucleus. Its function is as follows. Acts as a transcriptional activator that promotes transcription of muscle-specific target genes and plays a role in muscle differentiation, cell cycle exit and muscle atrophy. Essential for the development of functional embryonic skeletal fiber muscle differentiation. However is dispensable for postnatal skeletal muscle growth; phosphorylation by CAMK2G inhibits its transcriptional activity in respons to muscle activity. Required for the recruitment of the FACT complex to muscle-specific promoter regions, thus promoting gene expression initiation. During terminal myoblast differentiation, plays a role as a strong activator of transcription at loci with an open chromatin structure previously initiated by MYOD1. Together with MYF5 and MYOD1, co-occupies muscle-specific gene promoter core regions during myogenesis. Also cooperates with myocyte-specific enhancer factor MEF2D and BRG1-dependent recruitment of SWI/SNF chromatin-remodeling enzymes to alter chromatin structure at myogenic late gene promoters. Facilitates cell cycle exit during terminal muscle differentiation through the up-regulation of miR-20a expression, which in turn represses genes involved in cell cycle progression. Binds to the E-box containing (E1) promoter region of the miR-20a gene. Also plays a role in preventing reversal of muscle cell differentiation. Contributes to the atrophy-related gene expression in adult denervated muscles. Induces fibroblasts to differentiate into myoblasts. This Rattus norvegicus (Rat) protein is Myogenin (Myog).